Reading from the N-terminus, the 472-residue chain is Probable dipeptidase A (472 aa).

Cys-10 is an active-site residue.

This sequence belongs to the peptidase C69 family.

The enzyme catalyses an L-aminoacyl-L-amino acid + H2O = 2 an L-alpha-amino acid. In Streptococcus pyogenes serotype M18 (strain MGAS8232), this protein is Probable dipeptidase A (pepDA).